The sequence spans 310 residues: Nodulation protein D 1 (310 aa).

The HTH lysR-type domain occupies 6–63; the sequence is LDLNLLVALDALMTERQLTAAARRINLSQPAMSAAIARLRNYFHDDLFVMQGRELILT. The segment at residues 23-42 is a DNA-binding region (H-T-H motif); it reads LTAAARRINLSQPAMSAAIA.

The protein belongs to the LysR transcriptional regulatory family.

Its function is as follows. NodD regulates the expression of the nodABCFE genes which encode other nodulation proteins. NodD is also a negative regulator of its own expression. Binds flavonoids as inducers. In Neorhizobium galegae (Rhizobium galegae), this protein is Nodulation protein D 1 (nodD1).